A 457-amino-acid polypeptide reads, in one-letter code: UDP-N-acetylmuramate--L-alanine ligase (457 aa).

109–115 (GTDGKTT) contributes to the ATP binding site.

The protein belongs to the MurCDEF family.

Its subcellular location is the cytoplasm. The enzyme catalyses UDP-N-acetyl-alpha-D-muramate + L-alanine + ATP = UDP-N-acetyl-alpha-D-muramoyl-L-alanine + ADP + phosphate + H(+). It functions in the pathway cell wall biogenesis; peptidoglycan biosynthesis. Cell wall formation. The chain is UDP-N-acetylmuramate--L-alanine ligase from Thermotoga sp. (strain RQ2).